The chain runs to 309 residues: Taste receptor type 2 member 114 (309 aa).

The Extracellular segment spans residues 1–7 (MLGAMEG). A helical transmembrane segment spans residues 8–28 (VLLSVATSEALLGIVGNTFIA). Over 29–43 (LVNCMDCTRNKNLYN) the chain is Cytoplasmic. A helical membrane pass occupies residues 44–64 (IGFILTGLAISRICLVWILIT). The Extracellular portion of the chain corresponds to 65–87 (EAYIKIFSPQLLSPINIIELISY). Residues 88–108 (LWIITSQLNVWFATSLSIFYF) form a helical membrane-spanning segment. Topologically, residues 109–127 (LKIANFSHHIFLWLKRRIN) are cytoplasmic. A helical membrane pass occupies residues 128–148 (IVFAFLIGCLLMSWLFSFPVV). Residues 149-182 (VKMVKDKKMLYINSSWQIHMKKSELIINYVFTNG) are Extracellular-facing. A glycan (N-linked (GlcNAc...) asparagine) is linked at N161. The chain crosses the membrane as a helical span at residues 183–203 (GVFLLFIIMLIVCFLLIISLW). The Cytoplasmic segment spans residues 204–233 (RHSKWMQSNESGFRDLNTEVHVKTIKVLLS). The helical transmembrane segment at 234 to 254 (FIILFILHLIGITINVICLLV) threads the bilayer. Topologically, residues 255–259 (PENNL) are extracellular. A helical membrane pass occupies residues 260–280 (LFVFGLTIAFLYPCCHSLILI). Residues 281–309 (LANSRLKRCFVRILQQLMCSEEGKEFRNT) are Cytoplasmic-facing.

Belongs to the G-protein coupled receptor T2R family.

It is found in the membrane. Functionally, putative taste receptor which may play a role in the perception of bitterness. The protein is Taste receptor type 2 member 114 of Rattus norvegicus (Rat).